Reading from the N-terminus, the 487-residue chain is Aspartyl/glutamyl-tRNA(Asn/Gln) amidotransferase subunit B (487 aa).

The protein belongs to the GatB/GatE family. GatB subfamily. Heterotrimer of A, B and C subunits.

The enzyme catalyses L-glutamyl-tRNA(Gln) + L-glutamine + ATP + H2O = L-glutaminyl-tRNA(Gln) + L-glutamate + ADP + phosphate + H(+). The catalysed reaction is L-aspartyl-tRNA(Asn) + L-glutamine + ATP + H2O = L-asparaginyl-tRNA(Asn) + L-glutamate + ADP + phosphate + 2 H(+). Allows the formation of correctly charged Asn-tRNA(Asn) or Gln-tRNA(Gln) through the transamidation of misacylated Asp-tRNA(Asn) or Glu-tRNA(Gln) in organisms which lack either or both of asparaginyl-tRNA or glutaminyl-tRNA synthetases. The reaction takes place in the presence of glutamine and ATP through an activated phospho-Asp-tRNA(Asn) or phospho-Glu-tRNA(Gln). The chain is Aspartyl/glutamyl-tRNA(Asn/Gln) amidotransferase subunit B from Chlamydia abortus (strain DSM 27085 / S26/3) (Chlamydophila abortus).